The primary structure comprises 199 residues: Recombination protein RecR (199 aa).

The segment at 56–71 (CAVCGNIAEETQCRIC) adopts a C4-type zinc-finger fold. The region spanning 79 to 174 (TVICVVEEPK…KVTRLASGLP (96 aa)) is the Toprim domain.

This sequence belongs to the RecR family.

May play a role in DNA repair. It seems to be involved in an RecBC-independent recombinational process of DNA repair. It may act with RecF and RecO. The polypeptide is Recombination protein RecR (Thermobifida fusca (strain YX)).